A 410-amino-acid polypeptide reads, in one-letter code: Serine hydroxymethyltransferase (410 aa).

(6S)-5,6,7,8-tetrahydrofolate is bound by residues leucine 116 and 120–122 (GHL). Lysine 225 carries the N6-(pyridoxal phosphate)lysine modification.

This sequence belongs to the SHMT family. As to quaternary structure, homodimer. It depends on pyridoxal 5'-phosphate as a cofactor.

The protein resides in the cytoplasm. It catalyses the reaction (6R)-5,10-methylene-5,6,7,8-tetrahydrofolate + glycine + H2O = (6S)-5,6,7,8-tetrahydrofolate + L-serine. It participates in one-carbon metabolism; tetrahydrofolate interconversion. It functions in the pathway amino-acid biosynthesis; glycine biosynthesis; glycine from L-serine: step 1/1. In terms of biological role, catalyzes the reversible interconversion of serine and glycine with tetrahydrofolate (THF) serving as the one-carbon carrier. This reaction serves as the major source of one-carbon groups required for the biosynthesis of purines, thymidylate, methionine, and other important biomolecules. Also exhibits THF-independent aldolase activity toward beta-hydroxyamino acids, producing glycine and aldehydes, via a retro-aldol mechanism. In Lacticaseibacillus casei (strain BL23) (Lactobacillus casei), this protein is Serine hydroxymethyltransferase.